The sequence spans 159 residues: 2-C-methyl-D-erythritol 2,4-cyclodiphosphate synthase (159 aa).

The a divalent metal cation site is built by Asp8 and His10. Residues 8-10 (DVH) and 34-35 (HS) contribute to the 4-CDP-2-C-methyl-D-erythritol 2-phosphate site. His42 contacts a divalent metal cation. 4-CDP-2-C-methyl-D-erythritol 2-phosphate-binding positions include 56-58 (DIG), 61-65 (FPDTD), 100-106 (AQAPKMA), 132-135 (TTSE), Phe139, and Arg142.

Belongs to the IspF family. In terms of assembly, homotrimer. A divalent metal cation serves as cofactor.

The catalysed reaction is 4-CDP-2-C-methyl-D-erythritol 2-phosphate = 2-C-methyl-D-erythritol 2,4-cyclic diphosphate + CMP. It participates in isoprenoid biosynthesis; isopentenyl diphosphate biosynthesis via DXP pathway; isopentenyl diphosphate from 1-deoxy-D-xylulose 5-phosphate: step 4/6. Its function is as follows. Involved in the biosynthesis of isopentenyl diphosphate (IPP) and dimethylallyl diphosphate (DMAPP), two major building blocks of isoprenoid compounds. Catalyzes the conversion of 4-diphosphocytidyl-2-C-methyl-D-erythritol 2-phosphate (CDP-ME2P) to 2-C-methyl-D-erythritol 2,4-cyclodiphosphate (ME-CPP) with a corresponding release of cytidine 5-monophosphate (CMP). This chain is 2-C-methyl-D-erythritol 2,4-cyclodiphosphate synthase, found in Aliivibrio salmonicida (strain LFI1238) (Vibrio salmonicida (strain LFI1238)).